The following is a 310-amino-acid chain: Putative carbonic anhydrase 5 (310 aa).

The N-terminal stretch at 1 to 20 (MPSHLLVLSLLVALLVVVSC) is a signal peptide. The 255-residue stretch at 26–280 (HGWGYDENNG…LNGRRIQYRP (255 aa)) folds into the Alpha-carbonic anhydrase domain. The Zn(2+) site is built by histidine 117, histidine 119, and histidine 142. 223–224 (TT) lines the substrate pocket.

The protein belongs to the alpha-carbonic anhydrase family.

Its subcellular location is the secreted. It catalyses the reaction hydrogencarbonate + H(+) = CO2 + H2O. In terms of biological role, reversible hydration of carbon dioxide. This Caenorhabditis elegans protein is Putative carbonic anhydrase 5 (cah-5).